A 236-amino-acid polypeptide reads, in one-letter code: TVP38/TMEM64 family membrane protein YdjX (236 aa).

A run of 5 helical transmembrane segments spans residues 7 to 27 (FLFA…FGLF), 50 to 70 (LYIL…ILVI), 72 to 92 (GGIV…ATLA), 156 to 176 (IAFW…IVIY), and 192 to 212 (FILQ…LAKL). Residues 73–183 (GIVFGPLLGT…VIYTVMASDL (111 aa)) are VTT domain.

The protein belongs to the TVP38/TMEM64 family.

The protein localises to the cell membrane. This chain is TVP38/TMEM64 family membrane protein YdjX (ydjX), found in Escherichia coli (strain K12).